A 317-amino-acid polypeptide reads, in one-letter code: Metaxin-1 (317 aa).

Residues Lys-38, Lys-41, Lys-78, and Lys-168 each participate in a glycyl lysine isopeptide (Lys-Gly) (interchain with G-Cter in ubiquitin) cross-link. A helical membrane pass occupies residues Ile-272 to Val-292.

It belongs to the metaxin family. As to quaternary structure, interacts with MTX2/metaxin-2. Associates with the mitochondrial contact site and cristae organizing system (MICOS) complex, composed of at least MICOS10/MIC10, CHCHD3/MIC19, CHCHD6/MIC25, APOOL/MIC27, IMMT/MIC60, APOO/MIC23/MIC26 and QIL1/MIC13. This complex was also known under the names MINOS or MitOS complex. The MICOS complex associates with mitochondrial outer membrane proteins SAMM50, MTX1 and MTX2 (together described as components of the mitochondrial outer membrane sorting assembly machinery (SAM) complex) and DNAJC11, mitochondrial inner membrane protein TMEM11 and with HSPA9. The MICOS and SAM complexes together with DNAJC11 are part of a large protein complex spanning both membranes termed the mitochondrial intermembrane space bridging (MIB) complex. Interacts with ARMC1. In terms of processing, ubiquitinated by PRKN during mitophagy, leading to its degradation and enhancement of mitophagy. Deubiquitinated by USP30. As to expression, ubiquitous. Higher levels are seen in the kidney as compared to other tissues.

Its subcellular location is the mitochondrion outer membrane. Its function is as follows. Involved in transport of proteins into the mitochondrion. Essential for embryonic development. This is Metaxin-1 (Mtx1) from Mus musculus (Mouse).